Reading from the N-terminus, the 139-residue chain is Low molecular weight protein-tyrosine-phosphatase PtpB (139 aa).

Cys7 (nucleophile) is an active-site residue. Arg13 is an active-site residue. Catalysis depends on Asp111, which acts as the Proton donor.

It belongs to the low molecular weight phosphotyrosine protein phosphatase family.

The catalysed reaction is O-phospho-L-tyrosyl-[protein] + H2O = L-tyrosyl-[protein] + phosphate. Its function is as follows. Dephosphorylates the phosphotyrosine-containing proteins. The sequence is that of Low molecular weight protein-tyrosine-phosphatase PtpB (ptpB) from Staphylococcus epidermidis (strain ATCC 35984 / DSM 28319 / BCRC 17069 / CCUG 31568 / BM 3577 / RP62A).